The primary structure comprises 162 residues: Selenoprotein F (162 aa).

The first 28 residues, 1-28 (MAAGQGGWLRPALGLRLLLATAFQAVSA), serve as a signal peptide directing secretion. A non-standard amino acid (selenocysteine) is located at residue selenocysteine 93.

It belongs to the selenoprotein M/F family. In terms of assembly, forms a tight complex with UGGT1/UGCGL1. Interacts with UGGT2/UGCGL2. Interacts with RDH11.

Its subcellular location is the endoplasmic reticulum lumen. May be involved in redox reactions associated with the formation of disulfide bonds. May contribute to the quality control of protein folding in the endoplasmic reticulum. May regulate protein folding by enhancing the catalytic activity of UGGT1/UGCGL1 and UGGT2/UGCGL2. The chain is Selenoprotein F from Mus musculus (Mouse).